We begin with the raw amino-acid sequence, 208 residues long: MLWSFIAVCLSAWLSVDASYRGPTWQRWVFKPLTLLLLLLLAWQAPMFDAISYLVLAGLCASLLGDALTLLPRQRLMYAIGAFFLSHLLYTIYFASQMTLSFFWPLPLVLLVLGALLLAIIWTRLEEYRWPICTFIGMTLVMVWLAGELWFFRPTAPALSAFVGASLLFISNFVWLGSHYRRRFRADNAIAAACYFAGHFLIVRSLYL.

The next 6 membrane-spanning stretches (helical) occupy residues 35-55 (LLLLLLLAWQAPMFDAISYLV), 76-96 (LMYAIGAFFLSHLLYTIYFAS), 102-122 (FFWPLPLVLLVLGALLLAIIW), 132-152 (ICTFIGMTLVMVWLAGELWFF), 156-176 (APALSAFVGASLLFISNFVWL), and 188-208 (NAIAAACYFAGHFLIVRSLYL).

The protein belongs to the TMEM86 family.

The protein resides in the cell membrane. This is an uncharacterized protein from Escherichia coli O157:H7.